Here is a 273-residue protein sequence, read N- to C-terminus: Large ribosomal subunit protein uL2 (273 aa).

Disordered stretches follow at residues 30-50 (YAPL…GRIT) and 221-273 (RGTA…RRGK). Residues 253–273 (KGKKTRHNKRTDKFIVRRRGK) show a composition bias toward basic residues.

The protein belongs to the universal ribosomal protein uL2 family. As to quaternary structure, part of the 50S ribosomal subunit. Forms a bridge to the 30S subunit in the 70S ribosome.

Functionally, one of the primary rRNA binding proteins. Required for association of the 30S and 50S subunits to form the 70S ribosome, for tRNA binding and peptide bond formation. It has been suggested to have peptidyltransferase activity; this is somewhat controversial. Makes several contacts with the 16S rRNA in the 70S ribosome. The polypeptide is Large ribosomal subunit protein uL2 (Pasteurella multocida (strain Pm70)).